We begin with the raw amino-acid sequence, 604 residues long: Aspartate--tRNA(Asp/Asn) ligase (604 aa).

Glutamate 169 provides a ligand contact to L-aspartate. The tract at residues 193–196 is aspartate; it reads QLFK. Residue arginine 215 participates in L-aspartate binding. ATP-binding positions include 215–217 and glutamine 224; that span reads RDE. L-aspartate is bound at residue histidine 456. Glutamate 490 contacts ATP. An L-aspartate-binding site is contributed by arginine 497. 542–545 serves as a coordination point for ATP; sequence GWDR. The segment at 571 to 604 is disordered; that stretch reads PLTGAPAPITAQQRKEAGVDAQPEPKQAEAEPEA.

It belongs to the class-II aminoacyl-tRNA synthetase family. Type 1 subfamily. As to quaternary structure, homodimer.

It is found in the cytoplasm. It catalyses the reaction tRNA(Asx) + L-aspartate + ATP = L-aspartyl-tRNA(Asx) + AMP + diphosphate. Functionally, aspartyl-tRNA synthetase with relaxed tRNA specificity since it is able to aspartylate not only its cognate tRNA(Asp) but also tRNA(Asn). Reaction proceeds in two steps: L-aspartate is first activated by ATP to form Asp-AMP and then transferred to the acceptor end of tRNA(Asp/Asn). The polypeptide is Aspartate--tRNA(Asp/Asn) ligase (Micrococcus luteus (strain ATCC 4698 / DSM 20030 / JCM 1464 / CCM 169 / CCUG 5858 / IAM 1056 / NBRC 3333 / NCIMB 9278 / NCTC 2665 / VKM Ac-2230) (Micrococcus lysodeikticus)).